Here is a 247-residue protein sequence, read N- to C-terminus: Capsid protein (247 aa).

Residues 1-40 (MWGTSNCACAKFQIRRRYARPYRRRHIRRYRRRRRHFRRR) are DNA-binding. Positions 15 to 44 (RRRYARPYRRRHIRRYRRRRRHFRRRRFTT) are nuclear localization signals.

It belongs to the circoviridae capsid protein family. In terms of assembly, homomultimer. Assembles in the nucleus, presumably in an immature form, then migrates to the cytoplasm once assembled as mature virion. Interacts with Rep; this interaction relocates Rep into the nucleus.

It is found in the host nucleus. It localises to the virion. Functionally, self-assembles to form the virion icosahedral capsid with a T=1 symmetry. This very small capsid (17 - 22 nm in diameter) allows the virus to be very stable in the environment and resistant to some disinfectants, including detergents. Essential for the initial attachment to heparan sulfate moieties and chondroitin sulfate B of the host cell surface proteoglycans. After attachment, the virus is endocytosed and traffics to the nucleus. The capsid protein binds and transports the viral genome and Rep across the nuclear envelope. The sequence is that of Capsid protein (Cap) from Beak and feather disease virus (BFDV).